Here is a 131-residue protein sequence, read N- to C-terminus: Replicase polyprotein 1ab (131 aa).

Residues 1–128 (ITEFSWNKYL…KLLNFGNHFI (128 aa)) enclose the Nidovirus-type SAM-dependent 2'-O-MTase domain.

Functionally, the replicase polyprotein of coronaviruses is a multifunctional protein: it contains the activities necessary for the transcription of negative stranded RNA, leader RNA, subgenomic mRNAs and progeny virion RNA as well as proteinases responsible for the cleavage of the polyprotein into functional products. The chain is Replicase polyprotein 1ab (rep) from Sus scrofa (Pig).